Reading from the N-terminus, the 139-residue chain is AP-4 complex subunit sigma (139 aa).

The protein belongs to the adaptor complexes small subunit family. In terms of assembly, may be part of the adaptor protein complex 4 (AP-4), a heterotetramer composed of two large adaptins (epsilon-type subunitand beta-type subunit), a medium adaptin (mu-type subunit) and a small adaptin (sigma-type).

Its subcellular location is the golgi apparatus. The protein resides in the trans-Golgi network membrane. Its function is as follows. Probable component of an adaptor protein complex. Adaptor protein complexes are vesicle coat components involved both in vesicle formation and cargo selection. They control the vesicular transport of proteins in different trafficking pathways. The sequence is that of AP-4 complex subunit sigma from Dictyostelium discoideum (Social amoeba).